A 240-amino-acid polypeptide reads, in one-letter code: Ribosomal RNA small subunit methyltransferase G (240 aa).

Residues Gly78, Phe83, 129–130, and Arg147 each bind S-adenosyl-L-methionine; that span reads AE. Positions 218 to 240 are disordered; that stretch reads RRQTSKKYPRKPGTPNKSPLLEN.

It belongs to the methyltransferase superfamily. RNA methyltransferase RsmG family.

It localises to the cytoplasm. Its function is as follows. Specifically methylates the N7 position of guanine in position 535 of 16S rRNA. The sequence is that of Ribosomal RNA small subunit methyltransferase G from Staphylococcus haemolyticus (strain JCSC1435).